Reading from the N-terminus, the 520-residue chain is MSRAAAKFKIPMPVTKADFAFPSLRAFSIVVALDKQHGIGDGESIPWRVPEDMAFFKDQTTLLRNKKPPTDKKRNAVVMGRKTWESVPVKFRPLKGRLNVVLSSKATVEELLAPLPEEKRAAAAQDIVVVNGGLAAAVRLLARPPYCSSIETAYCVGGAQVYADAMLSPCVEKLQEVYLTRIHTTAPACTRFFPFPPENAATAWDLASSQGRRKSAVDGLEFEICKYVPRNHEERQYLELIDRIMKTGIAKEDRTGVGTLSLFGAQMRFSLRDNRLPLLTTKRVFWRGVCEELLWFLRGETNAQLLADKDIHIWDGNGSREFLDSRGLTENTEMDLGPVYGFQWRHFGAEYRGLEANYDGEGVDQIKFIVETIKANPNDRRLLFTAWNPCALHKMALPPCHLLAQFYVNTEKSELSCMLYQRSCDMGLGVPFNIASYALLTILIAKATGLRPGELVHTLGDAHVYRSHIDALKAQLERVPHAFPTLVFKEERQFLEDYELMDMEVIDYVPHPPIKMEMAV.

Residues 26 to 229 (AFSIVVALDK…LEFEICKYVP (204 aa)) form the DHFR domain. Valine 30 provides a ligand contact to substrate. Residues alanine 32 and 38–44 (GIGDGES) contribute to the NADP(+) site. Aspartate 52 contributes to the substrate binding site. Residues 81–83 (RKT), 102–105 (LSSK), and 157–164 (GGAQVYAD) each bind NADP(+). Substrate is bound by residues tyrosine 162 and threonine 180. The thymidylate synthase stretch occupies residues 234–520 (ERQYLELIDR…HPPIKMEMAV (287 aa)). Arginine 254 is a dUMP binding site. Cysteine 400 is a catalytic residue. DUMP-binding positions include histidine 401, 421-425 (QRSCD), asparagine 433, and 463-465 (HVY).

In the N-terminal section; belongs to the dihydrofolate reductase family. It in the C-terminal section; belongs to the thymidylate synthase family.

It catalyses the reaction (6S)-5,6,7,8-tetrahydrofolate + NADP(+) = 7,8-dihydrofolate + NADPH + H(+). The enzyme catalyses dUMP + (6R)-5,10-methylene-5,6,7,8-tetrahydrofolate = 7,8-dihydrofolate + dTMP. It participates in cofactor biosynthesis; tetrahydrofolate biosynthesis; 5,6,7,8-tetrahydrofolate from 7,8-dihydrofolate: step 1/1. Its function is as follows. Bifunctional enzyme. Involved in de novo dTMP biosynthesis. Key enzyme in folate metabolism. Catalyzes an essential reaction for de novo glycine and purine synthesis, DNA precursor synthesis, and for the conversion of dUMP to dTMP. The protein is Bifunctional dihydrofolate reductase-thymidylate synthase of Leishmania amazonensis.